Here is a 101-residue protein sequence, read N- to C-terminus: MAETTNTPETSHRKELIGLVVSTKMQKTIVVQVERQKSHAMYGRVISRRKRFYAHDEEQTAHIGDYVRIEETRPLSKLKRWKLAEVLRRSALAPEVQEAAS.

This sequence belongs to the universal ribosomal protein uS17 family. Part of the 30S ribosomal subunit.

Functionally, one of the primary rRNA binding proteins, it binds specifically to the 5'-end of 16S ribosomal RNA. This chain is Small ribosomal subunit protein uS17, found in Koribacter versatilis (strain Ellin345).